We begin with the raw amino-acid sequence, 534 residues long: Cytochrome P450 monooxygenase btcB (534 aa).

Asn-20 carries N-linked (GlcNAc...) asparagine glycosylation. Residues Ala-41 to Leu-61 traverse the membrane as a helical segment. N-linked (GlcNAc...) asparagine glycosylation is found at Asn-335, Asn-413, and Asn-431. Cys-484 serves as a coordination point for heme.

Belongs to the cytochrome P450 family. The cofactor is heme.

Its subcellular location is the membrane. Its pathway is secondary metabolite biosynthesis; terpenoid biosynthesis. In terms of biological role, cytochrome P4590 monooxygenase part of the gene cluster that mediates the biosynthesis of betaestacins. The bifunctional terpene synthase btcA converts isopentenyl diphosphate (IPP) and dimethylallyl diphosphate (DMAPP) into the sesterterpene betaestacin I. The C-terminal prenyltransferase (PT) domain of btcA catalyzes formation of GFPP, whereas the N-terminal terpene cyclase (TC) domain catalyzes the cyclization of GFPP into betaestacin I. The cytochrome P450 monooxygenase btcB oxidizes the C25 methyl group of betaestacin I to yield the carboxylic acid betaestacin IV via the alcohol betaestacin III. The cytochrome P450 monooxygenase btcC further catalyzes the multistep oxidation of betaestacin IV to produce several compounds, including betaestacins Va, Vb, Vc and VI. The chain is Cytochrome P450 monooxygenase btcB from Colletotrichum orbiculare (strain 104-T / ATCC 96160 / CBS 514.97 / LARS 414 / MAFF 240422) (Cucumber anthracnose fungus).